Here is a 171-residue protein sequence, read N- to C-terminus: 3-hydroxydecanoyl-[acyl-carrier-protein] dehydratase (171 aa).

Residue His-70 is part of the active site.

This sequence belongs to the thioester dehydratase family. FabA subfamily. As to quaternary structure, homodimer.

The protein resides in the cytoplasm. It catalyses the reaction a (3R)-hydroxyacyl-[ACP] = a (2E)-enoyl-[ACP] + H2O. The enzyme catalyses (3R)-hydroxydecanoyl-[ACP] = (2E)-decenoyl-[ACP] + H2O. The catalysed reaction is (2E)-decenoyl-[ACP] = (3Z)-decenoyl-[ACP]. It participates in lipid metabolism; fatty acid biosynthesis. Necessary for the introduction of cis unsaturation into fatty acids. Catalyzes the dehydration of (3R)-3-hydroxydecanoyl-ACP to E-(2)-decenoyl-ACP and then its isomerization to Z-(3)-decenoyl-ACP. Can catalyze the dehydratase reaction for beta-hydroxyacyl-ACPs with saturated chain lengths up to 16:0, being most active on intermediate chain length. The chain is 3-hydroxydecanoyl-[acyl-carrier-protein] dehydratase from Pseudomonas putida (strain GB-1).